The sequence spans 56 residues: Large ribosomal subunit protein bL32 (56 aa).

A disordered region spans residues 1–21 (MAVQKNKPTRSKRGMRRSHDA). Positions 7–16 (KPTRSKRGMR) are enriched in basic residues.

Belongs to the bacterial ribosomal protein bL32 family.

The protein is Large ribosomal subunit protein bL32 of Hamiltonella defensa subsp. Acyrthosiphon pisum (strain 5AT).